The primary structure comprises 375 residues: Succinyl-diaminopimelate desuccinylase (375 aa).

Residue H66 coordinates Zn(2+). Residue D68 is part of the active site. Position 99 (D99) interacts with Zn(2+). The active-site Proton acceptor is E133. 3 residues coordinate Zn(2+): E134, E162, and H348.

This sequence belongs to the peptidase M20A family. DapE subfamily. In terms of assembly, homodimer. The cofactor is Zn(2+). It depends on Co(2+) as a cofactor.

It catalyses the reaction N-succinyl-(2S,6S)-2,6-diaminopimelate + H2O = (2S,6S)-2,6-diaminopimelate + succinate. It functions in the pathway amino-acid biosynthesis; L-lysine biosynthesis via DAP pathway; LL-2,6-diaminopimelate from (S)-tetrahydrodipicolinate (succinylase route): step 3/3. Functionally, catalyzes the hydrolysis of N-succinyl-L,L-diaminopimelic acid (SDAP), forming succinate and LL-2,6-diaminopimelate (DAP), an intermediate involved in the bacterial biosynthesis of lysine and meso-diaminopimelic acid, an essential component of bacterial cell walls. This Methylobacillus flagellatus (strain ATCC 51484 / DSM 6875 / VKM B-1610 / KT) protein is Succinyl-diaminopimelate desuccinylase.